The following is a 962-amino-acid chain: RNA-binding protein 15 (962 aa).

Composition is skewed to basic and acidic residues over residues 1–10 (MRSAGREPLP), 34–52 (LRRD…ERSP), and 59–72 (RGGE…ERSK). The disordered stretch occupies residues 1 to 167 (MRSAGREPLP…SAPGGGDGVE (167 aa)). The segment covering 82–94 (GSSSGKTDSGGSR) has biased composition (low complexity). Positions 97–112 (LHLDKSSSRGGSREYE) are enriched in basic and acidic residues. Ser108 is subject to Phosphoserine. The span at 118 to 129 (SSSRLHSYSSPS) shows a compositional bias: low complexity. The span at 134–149 (SGGGESRSSSRGGGGE) shows a compositional bias: gly residues. Over residues 150-159 (SRSSGAASSA) the composition is skewed to low complexity. Residues 169-251 (KTLKISELGS…RPLKIEAVYV (83 aa)) enclose the RRM 1 domain. A phosphoserine mark is found at Ser178, Ser207, and Ser209. Residue Lys245 forms a Glycyl lysine isopeptide (Lys-Gly) (interchain with G-Cter in SUMO2) linkage. Ser252, Ser256, and Ser258 each carry phosphoserine. The tract at residues 257-297 (RSPLDKDAYAPSSSVVGTSVGSHRHAPGGGGGQRSLSPGGA) is disordered. A Phosphotyrosine modification is found at Tyr265. The span at 268 to 277 (SSSVVGTSVG) shows a compositional bias: low complexity. Ser291, Ser293, and Ser364 each carry phosphoserine. RRM domains follow at residues 373–450 (RTLF…YGKA) and 454–528 (TRLW…FADT). Residues Lys405, Lys419, and Lys444 each participate in a glycyl lysine isopeptide (Lys-Gly) (interchain with G-Cter in SUMO2) cross-link. At Lys449 the chain carries N6-acetyllysine. 2 stretches are compositionally biased toward basic and acidic residues: residues 553 to 580 (GHRA…RDLY) and 612 to 661 (SLDR…SERP). The segment at 553–779 (GHRAPDPLRS…KQDGGTAPVA (227 aa)) is disordered. Thr567 bears the Phosphothreonine mark. Arg577 is subject to Asymmetric dimethylarginine; alternate; by PRMT1. Residue Arg577 is modified to Omega-N-methylarginine; alternate; by PRMT1. A phosphoserine mark is found at Ser621, Ser655, Ser670, Ser674, and Ser701. Basic and acidic residues-rich tracts occupy residues 673 to 692 (RSPE…DRSS), 701 to 729 (SPVR…AERD), and 742 to 751 (NPLKKEDRSD). Lys745 participates in a covalent cross-link: Glycyl lysine isopeptide (Lys-Gly) (interchain with G-Cter in SUMO2). A compositionally biased stretch (low complexity) spans 754–771 (APSASTSSSKQKPPSQKQ). 2 positions are modified to phosphoserine: Ser768 and Ser782. The 180-residue stretch at 778–957 (VAASSPKLCL…YLVMIIVRAK (180 aa)) folds into the SPOC domain. Residues 866 to 885 (GSSDSRSSSSSATSDTAAST) form a disordered region. The span at 867-885 (SSDSRSSSSSATSDTAAST) shows a compositional bias: low complexity. The residue at position 936 (Ser936) is a Phosphoserine.

It belongs to the RRM Spen family. Component of the WMM complex, a N6-methyltransferase complex composed of a catalytic subcomplex, named MAC, and of an associated subcomplex, named MACOM. The MAC subcomplex is composed of METTL3 and METTL14. The MACOM subcomplex is composed of WTAP, ZC3H13, CBLL1/HAKAI, VIRMA, and, in some cases of RBM15 (RBM15 or RBM15B). Also a component of a MACOM-like complex, named WTAP complex, composed of WTAP, ZC3H13, CBLL1, VIRMA, RBM15, BCLAF1 and THRAP3. Interacts with RBPJ. Interacts (via SPOC domain) with SETD1B. Interacts with NXF1, the interaction is required to promote mRNA export. Interacts with SF3B1. In terms of processing, methylated at Arg-577 by PRMT1, leading to promote ubiquitination by CNOT4 and subsequent degradation by the proteasome. Post-translationally, ubiquitinated by CNOT4 following methylation at Arg-577 by PRMT1.

The protein resides in the nucleus speckle. It is found in the nucleus. The protein localises to the nucleoplasm. Its subcellular location is the nucleus envelope. It localises to the nucleus membrane. Its function is as follows. RNA-binding protein that acts as a key regulator of N6-methyladenosine (m6A) methylation of RNAs, thereby regulating different processes, such as hematopoietic cell homeostasis, alternative splicing of mRNAs and X chromosome inactivation mediated by Xist RNA. Associated component of the WMM complex, a complex that mediates N6-methyladenosine (m6A) methylation of RNAs, a modification that plays a role in the efficiency of mRNA splicing and RNA processing. Plays a key role in m6A methylation, possibly by binding target RNAs and recruiting the WMM complex. Involved in random X inactivation mediated by Xist RNA: acts by binding Xist RNA and recruiting the WMM complex, which mediates m6A methylation, leading to target YTHDC1 reader on Xist RNA and promoting transcription repression activity of Xist. Required for the development of multiple tissues, such as the maintenance of the homeostasis of long-term hematopoietic stem cells and for megakaryocyte (MK) and B-cell differentiation. Regulates megakaryocyte differentiation by regulating alternative splicing of genes important for megakaryocyte differentiation; probably regulates alternative splicing via m6A regulation. Required for placental vascular branching morphogenesis and embryonic development of the heart and spleen. Acts as a regulator of thrombopoietin response in hematopoietic stem cells by regulating alternative splicing of MPL. May also function as an mRNA export factor, stimulating export and expression of RTE-containing mRNAs which are present in many retrotransposons that require to be exported prior to splicing. High affinity binding of pre-mRNA to RBM15 may allow targeting of the mRNP to the export helicase DBP5 in a manner that is independent of splicing-mediated NXF1 deposition, resulting in export prior to splicing. May be implicated in HOX gene regulation. The sequence is that of RNA-binding protein 15 from Mus musculus (Mouse).